Consider the following 931-residue polypeptide: Transportin (931 aa).

HEAT repeat units follow at residues 10–37 (GLKQLVYVLNLSNSTSREVHDQIREELD), 42–79 (VPDYNNYLTLIFKSNELQPHIRSVAGLVLKTNIKQYFE), 88–121 (YIKREILPVLSDPDASVRHTVGNIITNLIKKSCF), 127–164 (LLPALNLALDSNSQDLIEGSLYTLSLLCEDSTKKLDSD), 171–201 (NQLIPKLIMFFKCNNADFRKKALVSISYFII), 214–241 (FLKGIFSMSEDPSEAVRTNVCKTLVTLV), 253–280 (KDVIQYMLHATKDKSEEVALEACEFWTA), 296–421 (PVLV…LSGI), 430–459 (VTLPLIEQRMNEQNPWPVRESAILALGAIA), 471–498 (SKVIPYLINTLNDPKPLVRSITCWTLSR), 512–545 (LHPLVVNLLNRIVDNNKKVQEAACSAFATLEEEA), 553–586 (LQMILVTFVNAFGKYQAKNLLILYDAISTLAKVV), 594–632 (ELINILVPPLLQKFNALDDSNKNLLPLLGCLNQVCSSIG), 640–693 (SLFF…GIGT), 704–735 (LPHLLLQCMNLRGSDVLQSSFALLGDMSKFCL), 743–776 (PDYLNILTNNLYPEYLSVCNNASWAIGEIAIRMP), 784–819 (VAIRDRLISNINKVNLNRGVLENTAVTIGRLGIVSP), 827–860 (DKFIQCWCMAIRRKTDDIEKDSAFRGMWLIINNN), and 869–900 (VYICDAVASWDKMQPDLYEAYFKLLHMYKTSM). The 68-residue stretch at 32-99 (IREELDKFHS…KREILPVLSD (68 aa)) folds into the Importin N-terminal domain. A disordered region spans residues 317–401 (DQGDDSMTPD…DDDDDDDGFE (85 aa)). Positions 358–381 (DNNNNSNNNNSSNNNSSNNNNNNN) are enriched in low complexity. The span at 382 to 401 (NEDDEEYNDDDDDDDDDGFE) shows a compositional bias: acidic residues.

Belongs to the importin beta family. Importin beta-2 subfamily. Forms a complex with an importin alpha subunit.

It localises to the cytoplasm. The protein resides in the nucleus envelope. Its function is as follows. Functions in nuclear protein import via a substrate-importin alpha-beta transport complex that passes though the nuclear pore complexes (NPC). Mediates docking of the substrate-importin complex to distinct nucleoporins. The polypeptide is Transportin (tnpo) (Dictyostelium discoideum (Social amoeba)).